A 439-amino-acid chain; its full sequence is GTPase Der (439 aa).

2 EngA-type G domains span residues 4–169 and 177–352; these read AMVS…PQEE and IKIA…EEYN. Residues 10 to 17, 57 to 61, 120 to 123, 183 to 190, 230 to 234, and 295 to 298 each bind GTP; these read GRPNVGKS, DTGGL, NKVD, GKPNVGKS, DTAGI, and NKWD. The KH-like domain occupies 353–437; sequence KRITTGLLNN…PIVISTKKRG (85 aa).

This sequence belongs to the TRAFAC class TrmE-Era-EngA-EngB-Septin-like GTPase superfamily. EngA (Der) GTPase family. In terms of assembly, associates with the 50S ribosomal subunit.

Its function is as follows. GTPase that plays an essential role in the late steps of ribosome biogenesis. The protein is GTPase Der of Thermoanaerobacter sp. (strain X514).